The primary structure comprises 157 residues: Endoribonuclease YbeY (157 aa).

Zn(2+)-binding residues include His116, His120, and His126.

It belongs to the endoribonuclease YbeY family. Requires Zn(2+) as cofactor.

The protein localises to the cytoplasm. In terms of biological role, single strand-specific metallo-endoribonuclease involved in late-stage 70S ribosome quality control and in maturation of the 3' terminus of the 16S rRNA. The polypeptide is Endoribonuclease YbeY (Blochmanniella pennsylvanica (strain BPEN)).